The following is a 251-amino-acid chain: GTP cyclohydrolase 1 type 2 homolog (251 aa).

Positions 63, 64, 101, 219, and 223 each coordinate a divalent metal cation.

The protein belongs to the GTP cyclohydrolase I type 2/NIF3 family. As to quaternary structure, toroid-shaped homohexamer. In the hexamer, 3 dimers assemble to form a ring-like structure surrounding a central hole.

This Haemophilus influenzae (strain ATCC 51907 / DSM 11121 / KW20 / Rd) protein is GTP cyclohydrolase 1 type 2 homolog.